Here is a 781-residue protein sequence, read N- to C-terminus: N-acetylneuraminate (7)9-O-acetyltransferase (781 aa).

Residues 1 to 15 (MAVLAYNLGKREINQ) are Cytoplasmic-facing. The chain crosses the membrane as a helical span at residues 16 to 36 (YFSIKNAKLLAAAAVVLLTVF). Residues 37-308 (HAASRHYGSS…SAPPLSVLQK (272 aa)) lie on the Lumenal side of the membrane. Ser94 serves as the catalytic Acyl-ester intermediate. N-linked (GlcNAc...) asparagine glycans are attached at residues Asn139, Asn185, and Asn239. Residues Asp264 and His267 contribute to the active site. A helical membrane pass occupies residues 309-329 (LAAAVLLVSVVCFVLLGFSSH). Residues 330 to 350 (RKSRPAPDVESGEEKKHPAAV) form a disordered region. At 330-354 (RKSRPAPDVESGEEKKHPAAVGQLN) the chain is on the cytoplasmic side. A helical membrane pass occupies residues 355 to 375 (PKGPLLAIGKMSLIMLYFYLC). The Lumenal portion of the chain corresponds to 376–386 (DRADIFMKEQK). The chain crosses the membrane as a helical span at residues 387–407 (FYTHSAFFIPLIYIFVLGVFY). Over 408–430 (SENSKETKLLNREQTDEWKGWMQ) the chain is Cytoplasmic. A helical membrane pass occupies residues 431-451 (LVILIYHISGASAFIPVYMHV). Position 452 (Arg452) is a topological domain, lumenal. A helical transmembrane segment spans residues 453–473 (VLVAAYLFQTGYGHFSFFWLK). Over 474–477 (GDFG) the chain is Cytoplasmic. The helical transmembrane segment at 478–498 (LYRVCQVLFRLNFLVVVLCLV) threads the bilayer. Over 499–504 (MDRPYQ) the chain is Lumenal. The chain crosses the membrane as a helical span at residues 505-525 (FYYFVPLVTFWFAVIYATMAL). Residues 526–537 (WPQILQKQANGS) lie on the Cytoplasmic side of the membrane. The helical transmembrane segment at 538-558 (AFWNLALLLKLLGLLLFIGFF) threads the bilayer. The Lumenal segment spans residues 559–595 (AYSQELFEGIFSVWPLSKLFELQGSIHEWWFRWKLDR). The chain crosses the membrane as a helical span at residues 596-616 (FAVVNGMLFAFIYLLLQKYQL). The Cytoplasmic portion of the chain corresponds to 617-629 (LSEGKGEPLFSNK). Residues 630–650 (ISNCLLFVSVVSFMTYSIWAS) traverse the membrane as a helical segment. The Lumenal segment spans residues 651-660 (GCKNKSECNE). Residue Asn654 is glycosylated (N-linked (GlcNAc...) asparagine). A helical membrane pass occupies residues 661 to 681 (MHPYISVILAFILIRNIPGYA). At 682-687 (RSLYSS) the chain is on the cytoplasmic side. The chain crosses the membrane as a helical span at residues 688–708 (FFAWFGKISLELFICQYHIWL). At 709 to 714 (AADTKG) the chain is on the lumenal side. A helical membrane pass occupies residues 715 to 735 (ILVLIPGNPTLNIIVSTFIFV). Topologically, residues 736–756 (CVAHEISQITNDLAQVAIPKE) are cytoplasmic. A helical transmembrane segment spans residues 757–777 (SGPLLKRLLGAGVFLVLVLTL). Residues 778–781 (SQKD) lie on the Lumenal side of the membrane.

The protein belongs to the PC-esterase family. CASD1 subfamily.

It is found in the golgi apparatus membrane. The enzyme catalyses CMP-N-acetyl-beta-neuraminate + acetyl-CoA = CMP-N-acetyl-9-O-acetyl-beta-neuraminate + CoA. It carries out the reaction a ganglioside GD3 (d18:1(4E)) + acetyl-CoA = a ganglioside Ac-O-7-GD3(d18:1(4E)) + CoA. The catalysed reaction is CMP-N-acetyl-beta-neuraminate + acetyl-CoA = CMP-N-acetyl-7-O-acetyl-beta-neuraminate + CoA. Key enzyme in the biosynthesis of O-acetylated (O-Ac) sialoglycans such as gangliosides O-AcGD3 and O-AcGD2, which affect various processes such as cell-cell interactions, host-pathogen recognition. Catalyzes the transfer of an acetyl group from a donor, the acetyl-coenzyme-A molecule (acetyl-CoA), to the C7/8/9 OH-position of a sialic acid residue. The primary site of O-acetyl group transfer on sialic acid seems to depend on cell type and can be C7, from which the O-acetyl group could subsequently migrate to the C8 and then to the C9 position, or at C9 with possibility of migrating to the C8 and then to the C7 position. Together with ST8SIA1 (GD3 synthase) it increases the levels of ganglioside Ac-O-7-GD3. Can transfer the acetyl group from acetyl-CoA to free sialate (N-acetylneuraminate, Neu5Ac) in vitro, but has preferred substrate specificity for CMP-activated sialate (CMP-Neu5Ac), resulting in the formation of 9-O-acetylated CMP-Neu5Ac (CMP-Neu5,9Ac2). CMP-Neu5,9Ac2 may be used by sialyltransferases as a sialate donor for glycoconjugate acceptors such as ganglioside GD3. O-acetylation at position C9 of ganglioside GD3 can counteract the pro-apoptotic effects of the ganglioside GD3 in tumor cells. This is N-acetylneuraminate (7)9-O-acetyltransferase from Danio rerio (Zebrafish).